Reading from the N-terminus, the 180-residue chain is Cuticle protein 3 (180 aa).

An N-terminal signal peptide occupies residues 1-16 (MMKLIVLAAFIGVCAG). In terms of domain architecture, Chitin-binding type R&amp;R spans 58 to 121 (EQGFRYAYET…PQGAHFPTPP (64 aa)).

This is Cuticle protein 3 from Lonomia obliqua (Moth).